Here is a 341-residue protein sequence, read N- to C-terminus: Phenazine O-methyltransferase PhzM (341 aa).

Residues D205 and G231–F233 each bind S-adenosyl-L-methionine. H251 functions as the Proton acceptor in the catalytic mechanism.

The protein belongs to the class I-like SAM-binding methyltransferase superfamily. Cation-independent O-methyltransferase family. In terms of assembly, homodimer.

The catalysed reaction is 1,6-dihydroxyphenazine + S-adenosyl-L-methionine = 1-hydroxy-6-methoxyphenazine + S-adenosyl-L-homocysteine + H(+). The enzyme catalyses 1-hydroxy-6-methoxyphenazine + S-adenosyl-L-methionine = 1,6-dimethoxyphenazine + S-adenosyl-L-homocysteine + H(+). It carries out the reaction 1-hydroxy-6-methoxyphenazine N(10)-oxide + S-adenosyl-L-methionine = 1,6-dimethoxyphenazine N(5)-oxide + S-adenosyl-L-homocysteine. It catalyses the reaction 1,6-dihydroxyphenazine N(5),N(10)-dioxide + S-adenosyl-L-methionine = 1-hydroxy-6-methoxyphenazine N(5),N(10)-dioxide + S-adenosyl-L-homocysteine. The catalysed reaction is 1-hydroxy-6-methoxyphenazine N(5),N(10)-dioxide + S-adenosyl-L-methionine = 1,6-dimethoxyphenazine N(5),N(10)-dioxide + S-adenosyl-L-homocysteine. Involved in the biosynthesis of phenazine natural products including myxin, an N(5),N(10)-dioxide phenazine antiobiotic, which has antimicrobial activity. O-methyltransferase, which converts iodinin (1,6-dihydroxyphenazine N(5),N(10)-dioxide) to myxin (1-hydroxy-6-methoxyphenazine N(5),N(10)-dioxide). Catalyzes both monomethoxy and dimethoxy formation of phenazine natural compounds. Acts on a wide variety of substrates, catalyzing O-methylation of phenazines with non-, mono- or di-N-oxide. Highest activity with 1,6-dihydroxyphenazine (DHP) as substrate. Less active with monohydroxy-containing and monohydroxy-monomethoxy-containing phenazines. Least active with non-phenazine substrates, such as 8-hydroxyquinoline and 6-hydroxyquinoline. Is not able to convert 1-hydroxyphenazine to 1-hydroxy-N5-methylphenazine (pyocyanine), hence does not function as an N-methyltransferase. This Lysobacter antibioticus protein is Phenazine O-methyltransferase PhzM.